We begin with the raw amino-acid sequence, 459 residues long: Bifunctional protein GlmU (459 aa).

The tract at residues 1–229 (MTNYAIILAA…FDESLGVNDR (229 aa)) is pyrophosphorylase. UDP-N-acetyl-alpha-D-glucosamine contacts are provided by residues 8 to 11 (LAAG), Lys22, Gln72, and 77 to 78 (GT). Residue Asp102 participates in Mg(2+) binding. Gly139, Glu154, Asn169, and Asn227 together coordinate UDP-N-acetyl-alpha-D-glucosamine. A Mg(2+)-binding site is contributed by Asn227. A linker region spans residues 230–250 (VALATAESVMRRRINQQHMVN). An N-acetyltransferase region spans residues 251–459 (GVSFVNPHAT…KRLPHHPQNK (209 aa)). Positions 332 and 350 each coordinate UDP-N-acetyl-alpha-D-glucosamine. Residue His362 is the Proton acceptor of the active site. UDP-N-acetyl-alpha-D-glucosamine is bound by residues Tyr365 and Asn376. Acetyl-CoA contacts are provided by residues Ala379, 385 to 386 (NY), Ser404, Ala422, and Arg439.

This sequence in the N-terminal section; belongs to the N-acetylglucosamine-1-phosphate uridyltransferase family. The protein in the C-terminal section; belongs to the transferase hexapeptide repeat family. As to quaternary structure, homotrimer. Requires Mg(2+) as cofactor.

The protein localises to the cytoplasm. The catalysed reaction is alpha-D-glucosamine 1-phosphate + acetyl-CoA = N-acetyl-alpha-D-glucosamine 1-phosphate + CoA + H(+). It catalyses the reaction N-acetyl-alpha-D-glucosamine 1-phosphate + UTP + H(+) = UDP-N-acetyl-alpha-D-glucosamine + diphosphate. It functions in the pathway nucleotide-sugar biosynthesis; UDP-N-acetyl-alpha-D-glucosamine biosynthesis; N-acetyl-alpha-D-glucosamine 1-phosphate from alpha-D-glucosamine 6-phosphate (route II): step 2/2. Its pathway is nucleotide-sugar biosynthesis; UDP-N-acetyl-alpha-D-glucosamine biosynthesis; UDP-N-acetyl-alpha-D-glucosamine from N-acetyl-alpha-D-glucosamine 1-phosphate: step 1/1. It participates in bacterial outer membrane biogenesis; LPS lipid A biosynthesis. In terms of biological role, catalyzes the last two sequential reactions in the de novo biosynthetic pathway for UDP-N-acetylglucosamine (UDP-GlcNAc). The C-terminal domain catalyzes the transfer of acetyl group from acetyl coenzyme A to glucosamine-1-phosphate (GlcN-1-P) to produce N-acetylglucosamine-1-phosphate (GlcNAc-1-P), which is converted into UDP-GlcNAc by the transfer of uridine 5-monophosphate (from uridine 5-triphosphate), a reaction catalyzed by the N-terminal domain. The protein is Bifunctional protein GlmU of Streptococcus sanguinis (strain SK36).